An 88-amino-acid chain; its full sequence is Cell division topological specificity factor (88 aa).

Belongs to the MinE family.

In terms of biological role, prevents the cell division inhibition by proteins MinC and MinD at internal division sites while permitting inhibition at polar sites. This ensures cell division at the proper site by restricting the formation of a division septum at the midpoint of the long axis of the cell. The protein is Cell division topological specificity factor of Cronobacter sakazakii (strain ATCC BAA-894) (Enterobacter sakazakii).